Reading from the N-terminus, the 141-residue chain is Nucleoside diphosphate kinase (141 aa).

Residues Lys-11, Phe-59, Arg-87, Thr-93, Arg-104, and Asn-114 each coordinate ATP. His-117 acts as the Pros-phosphohistidine intermediate in catalysis.

It belongs to the NDK family. Homotetramer. The cofactor is Mg(2+).

The protein resides in the cytoplasm. It catalyses the reaction a 2'-deoxyribonucleoside 5'-diphosphate + ATP = a 2'-deoxyribonucleoside 5'-triphosphate + ADP. The enzyme catalyses a ribonucleoside 5'-diphosphate + ATP = a ribonucleoside 5'-triphosphate + ADP. Functionally, major role in the synthesis of nucleoside triphosphates other than ATP. The ATP gamma phosphate is transferred to the NDP beta phosphate via a ping-pong mechanism, using a phosphorylated active-site intermediate. The protein is Nucleoside diphosphate kinase of Neisseria gonorrhoeae (strain NCCP11945).